We begin with the raw amino-acid sequence, 183 residues long: Porphobilinogen deaminase (183 aa).

It belongs to the HMBS family. As to quaternary structure, monomer. Dipyrromethane serves as cofactor.

The enzyme catalyses 4 porphobilinogen + H2O = hydroxymethylbilane + 4 NH4(+). The protein operates within porphyrin-containing compound metabolism; protoporphyrin-IX biosynthesis; coproporphyrinogen-III from 5-aminolevulinate: step 2/4. Its function is as follows. Tetrapolymerization of the monopyrrole PBG into the hydroxymethylbilane pre-uroporphyrinogen in several discrete steps. This is Porphobilinogen deaminase (hemC) from Yersinia intermedia.